Reading from the N-terminus, the 485-residue chain is Aspartyl/glutamyl-tRNA(Asn/Gln) amidotransferase subunit B (485 aa).

The protein belongs to the GatB/GatE family. GatB subfamily. Heterotrimer of A, B and C subunits.

It catalyses the reaction L-glutamyl-tRNA(Gln) + L-glutamine + ATP + H2O = L-glutaminyl-tRNA(Gln) + L-glutamate + ADP + phosphate + H(+). The catalysed reaction is L-aspartyl-tRNA(Asn) + L-glutamine + ATP + H2O = L-asparaginyl-tRNA(Asn) + L-glutamate + ADP + phosphate + 2 H(+). Its function is as follows. Allows the formation of correctly charged Asn-tRNA(Asn) or Gln-tRNA(Gln) through the transamidation of misacylated Asp-tRNA(Asn) or Glu-tRNA(Gln) in organisms which lack either or both of asparaginyl-tRNA or glutaminyl-tRNA synthetases. The reaction takes place in the presence of glutamine and ATP through an activated phospho-Asp-tRNA(Asn) or phospho-Glu-tRNA(Gln). The polypeptide is Aspartyl/glutamyl-tRNA(Asn/Gln) amidotransferase subunit B (Borrelia recurrentis (strain A1)).